Here is a 145-residue protein sequence, read N- to C-terminus: MKIKIQKIHPNALIPKYQTEGSSGFDLHAIEEVMIKPHSVGLVKIGICLSLEVGYELQVRTRSGLALNHQVVVLNSPGTVDNDYRGEIKVILANLSDKDFKVQVGDRIAQGVVQKTYKAEFIECEQLDETSRGSGGFGSTGVSKA.

Residues 62–64, Asn-75, 79–81, and Lys-89 each bind substrate; these read RSG and TVD.

Belongs to the dUTPase family. Mg(2+) is required as a cofactor.

The catalysed reaction is dUTP + H2O = dUMP + diphosphate + H(+). It functions in the pathway pyrimidine metabolism; dUMP biosynthesis; dUMP from dCTP (dUTP route): step 2/2. Its function is as follows. This enzyme is involved in nucleotide metabolism: it produces dUMP, the immediate precursor of thymidine nucleotides and it decreases the intracellular concentration of dUTP so that uracil cannot be incorporated into DNA. This chain is Deoxyuridine 5'-triphosphate nucleotidohydrolase, found in Helicobacter pylori (strain Shi470).